The sequence spans 372 residues: Cytochrome b (372 aa).

4 helical membrane-spanning segments follow: residues 25–45 (FGSM…FLAI), 69–90 (WIMQ…YIHI), 105–125 (WLSG…GYVL), and 170–190 (FFAL…IHII). Heme b contacts are provided by histidine 75 and histidine 89. Heme b-binding residues include histidine 174 and histidine 188. Residue histidine 193 coordinates a ubiquinone. 4 helical membrane passes run 218–238 (YKDM…LSFS), 280–300 (LGGT…PFTH), 312–332 (LSQI…WTAT), and 339–358 (FISI…IMNP).

Belongs to the cytochrome b family. The cytochrome bc1 complex contains 3 respiratory subunits (MT-CYB, CYC1 and UQCRFS1), 2 core proteins (UQCRC1 and UQCRC2) and probably 6 low-molecular weight proteins. Requires heme b as cofactor.

The protein localises to the mitochondrion inner membrane. Component of the ubiquinol-cytochrome c reductase complex (complex III or cytochrome b-c1 complex) that is part of the mitochondrial respiratory chain. The b-c1 complex mediates electron transfer from ubiquinol to cytochrome c. Contributes to the generation of a proton gradient across the mitochondrial membrane that is then used for ATP synthesis. The chain is Cytochrome b (MT-CYB) from Walterinnesia aegyptia (Desert black snake).